A 399-amino-acid polypeptide reads, in one-letter code: 1-deoxy-D-xylulose 5-phosphate reductoisomerase (399 aa).

NADPH-binding residues include T13, G14, S15, I16, and N127. Residue K128 participates in 1-deoxy-D-xylulose 5-phosphate binding. E129 lines the NADPH pocket. A Mn(2+)-binding site is contributed by D153. S154, E155, S187, and H210 together coordinate 1-deoxy-D-xylulose 5-phosphate. E155 is a Mn(2+) binding site. G216 provides a ligand contact to NADPH. The 1-deoxy-D-xylulose 5-phosphate site is built by S223, N228, K229, and E232. E232 contributes to the Mn(2+) binding site.

The protein belongs to the DXR family. Mg(2+) is required as a cofactor. It depends on Mn(2+) as a cofactor.

The catalysed reaction is 2-C-methyl-D-erythritol 4-phosphate + NADP(+) = 1-deoxy-D-xylulose 5-phosphate + NADPH + H(+). The protein operates within isoprenoid biosynthesis; isopentenyl diphosphate biosynthesis via DXP pathway; isopentenyl diphosphate from 1-deoxy-D-xylulose 5-phosphate: step 1/6. In terms of biological role, catalyzes the NADPH-dependent rearrangement and reduction of 1-deoxy-D-xylulose-5-phosphate (DXP) to 2-C-methyl-D-erythritol 4-phosphate (MEP). In Bordetella parapertussis (strain 12822 / ATCC BAA-587 / NCTC 13253), this protein is 1-deoxy-D-xylulose 5-phosphate reductoisomerase.